A 258-amino-acid chain; its full sequence is uncharacterized protein (258 aa).

This is an uncharacterized protein from Streptococcus pneumoniae serotype 4 (strain ATCC BAA-334 / TIGR4).